The chain runs to 275 residues: HUWE1-associated protein modifying stress responses 1 (275 aa).

A compositionally biased stretch (acidic residues) spans 32–44 (AEQDEQLPPELQE). Residues 32–51 (AEQDEQLPPELQEEAAAAAQ) form a disordered region. The segment at 80–152 (QQPGLSLWVP…LISFLCGKVP (73 aa)) is HUWE1-binding and HAPSTR1 oligomerization (HBO) domain. Disordered regions lie at residues 155-181 (RNSRAPPRLTVVSPNRATSTETSSSVE), 204-227 (SVRSSTPGSPTHVSSGSNASRRRN), and 250-275 (GTRKRTSAQCGDVITDSPTHKRNRMI). Residue Ser167 is modified to Phosphoserine. The span at 172-181 (TSTETSSSVE) shows a compositional bias: low complexity. A compositionally biased stretch (polar residues) spans 204-216 (SVRSSTPGSPTHV). Ser212 is subject to Phosphoserine.

Belongs to the HAPSTR1 family. As to quaternary structure, homooligomer. Heterooligomer with HAPSTR2; the interaction is direct and stabilizes HAPSTR1. Interacts with HUWE1. Post-translationally, ubiquitinated by HUWE1. Promotes HAPSTR1 degradation through polyubiquitination.

It localises to the nucleus. Its subcellular location is the cytoplasm. Its function is as follows. Acts as a central player within a network of stress response pathways promoting cellular adaptability. The E3 ligase HUWE1 assists HAPSTR1 in controlling stress signaling and in turn, HUWE1 feeds back to promote the degradation of HAPSTR1. HAPSTR1 represents a central coordination mechanism for stress response programs. Functions as a negative regulator of TP53/P53 in the cellular response to telomere erosion and probably also DNA damage. May attenuate p53/TP53 activation through the E3 ubiquitin ligase HUWE1. This chain is HUWE1-associated protein modifying stress responses 1, found in Homo sapiens (Human).